Reading from the N-terminus, the 73-residue chain is Putative sulfur carrier protein AF_0556 (73 aa).

Cys11 acts as the Cysteine persulfide intermediate in catalysis.

This sequence belongs to the sulfur carrier protein TusA family.

This chain is Putative sulfur carrier protein AF_0556, found in Archaeoglobus fulgidus (strain ATCC 49558 / DSM 4304 / JCM 9628 / NBRC 100126 / VC-16).